A 125-amino-acid polypeptide reads, in one-letter code: Fluoride-specific ion channel FluC (125 aa).

4 helical membrane-spanning segments follow: residues 1-21, 32-52, 68-88, and 101-121; these read MIQA…RYYV, AFPW…GVFA, LLIT…LDAI, and IYTV…LAVM. Residues Gly75 and Thr78 each contribute to the Na(+) site.

The protein belongs to the fluoride channel Fluc/FEX (TC 1.A.43) family.

It is found in the cell inner membrane. It catalyses the reaction fluoride(in) = fluoride(out). Its activity is regulated as follows. Na(+) is not transported, but it plays an essential structural role and its presence is essential for fluoride channel function. Functionally, fluoride-specific ion channel. Important for reducing fluoride concentration in the cell, thus reducing its toxicity. The chain is Fluoride-specific ion channel FluC from Rhizobium leguminosarum bv. trifolii (strain WSM2304).